The chain runs to 164 residues: LWamide neuropeptides (164 aa).

A propeptide spanning residues 1–6 (RSADAQ) is cleaved from the precursor. Residues 1–92 (RSADAQQHGL…WGRSADAQQP (92 aa)) form a disordered region. 2 positions are modified to tryptophan amide: tryptophan 11 and tryptophan 20. A propeptide spanning residues 23 to 27 (SADAQ) is cleaved from the precursor. Residues tryptophan 32 and tryptophan 41 each carry the tryptophan amide modification. A propeptide spanning residues 44-49 (SAEPGQ) is cleaved from the precursor. Tryptophan amide occurs at positions 53 and 62. Positions 65–70 (SAEPLQ) are excised as a propeptide. A tryptophan amide mark is found at tryptophan 74 and tryptophan 83. Residues 86 to 90 (SADAQ) constitute a propeptide that is removed on maturation. 3 positions are modified to tryptophan amide: tryptophan 95, tryptophan 106, and tryptophan 115. Positions 118–123 (SADPGQ) are excised as a propeptide. Tryptophan 127 and tryptophan 137 each carry tryptophan amide. A propeptide spanning residues 140-164 (SYEPPQFEDLEDLKKKSAIPKPSEQ) is cleaved from the precursor.

Belongs to the LWamide neuropeptide family.

The protein resides in the secreted. Its function is as follows. Metamorphosin A may be part of an internal signaling system involved in control of metamorphosis. The chain is LWamide neuropeptides from Actinia equina (Beadlet anemone).